The sequence spans 306 residues: Acetyl-coenzyme A carboxylase carboxyl transferase subunit beta (306 aa).

In terms of domain architecture, CoA carboxyltransferase N-terminal spans 27–296 (LWHKCPSCEA…PRFVAPVIEP (270 aa)). Residues C31, C34, C50, and C53 each contribute to the Zn(2+) site. Residues 31–53 (CPSCEAVLYRPELEKTLDVCPKC) form a C4-type zinc finger.

It belongs to the AccD/PCCB family. As to quaternary structure, acetyl-CoA carboxylase is a heterohexamer composed of biotin carboxyl carrier protein (AccB), biotin carboxylase (AccC) and two subunits each of ACCase subunit alpha (AccA) and ACCase subunit beta (AccD). Zn(2+) serves as cofactor.

Its subcellular location is the cytoplasm. The enzyme catalyses N(6)-carboxybiotinyl-L-lysyl-[protein] + acetyl-CoA = N(6)-biotinyl-L-lysyl-[protein] + malonyl-CoA. Its pathway is lipid metabolism; malonyl-CoA biosynthesis; malonyl-CoA from acetyl-CoA: step 1/1. Functionally, component of the acetyl coenzyme A carboxylase (ACC) complex. Biotin carboxylase (BC) catalyzes the carboxylation of biotin on its carrier protein (BCCP) and then the CO(2) group is transferred by the transcarboxylase to acetyl-CoA to form malonyl-CoA. The sequence is that of Acetyl-coenzyme A carboxylase carboxyl transferase subunit beta from Pseudomonas syringae pv. syringae (strain B728a).